Reading from the N-terminus, the 336-residue chain is Flagellar filament 41 kDa core protein (336 aa).

Residues 208 to 236 (AAPVQEGVQQEGAQQPAPATAPSQGGVNS) form a disordered region. Residues 210-233 (PVQEGVQQEGAQQPAPATAPSQGG) are compositionally biased toward low complexity.

This sequence belongs to the bacterial flagellin family. As to quaternary structure, the flagellum consists of an outer layer composed of repeating units of FlaA around a core that contains several antigenically related polypeptides.

The protein resides in the periplasmic flagellum. Its subcellular location is the periplasm. Its function is as follows. Component of the core of the flagella. In Borreliella burgdorferi (strain ATCC 35210 / DSM 4680 / CIP 102532 / B31) (Borrelia burgdorferi), this protein is Flagellar filament 41 kDa core protein (fla).